A 564-amino-acid chain; its full sequence is Benomyl/methotrexate resistance protein (564 aa).

The disordered stretch occupies residues 60-101 (IDNQGEPNSSQSSSSNNTIVDNNNNNNNDVDGDKIVVTWDGD). The segment covering 67 to 88 (NSSQSSSSNNTIVDNNNNNNND) has biased composition (low complexity). 12 helical membrane passes run 116-136 (AFFIFQISFLTTSVYMGSAVY), 153-173 (VATLPLTLFVIGYGVGPLVFS), 184-204 (TSIYIITLFLFVILQIPTALV), 210-229 (LCILRFLGGFFASPCLATGG), 241-262 (LPVGLAAWSLGAVCGPSFGPFF), 274-294 (WTFWFMCIISGFSFVMLCFTL), 358-374 (IYIAMVYSILYLFFEVF), 393-411 (YMSIVIGIVIAAFIYIPVI), 431-451 (IPIAIVGGILLTSGLFIFGWS), 457-476 (HWVGPLFGAATTASGAFLIF), 489-506 (PHYIASVFASNDLFRSVI), and 530-551 (WGSSVLGFITLVMIAIPVLFYL).

Belongs to the major facilitator superfamily. CAR1 family.

It is found in the membrane. In terms of biological role, probable transporter. Confers resistance to benomyl and methotrexate. This chain is Benomyl/methotrexate resistance protein (MDR1), found in Candida albicans (Yeast).